The chain runs to 847 residues: Mitogen-activated protein kinase kinase kinase 11 (847 aa).

Ser11 is subject to Phosphoserine. Residues 11 to 38 (SPLGSWNGSGSGGGGGGGGGRPEGSPKA) form a disordered region. The segment covering 17–32 (NGSGSGGGGGGGGGRP) has biased composition (gly residues). A Phosphoserine modification is found at Ser35. Residues 41–105 (YANPVWTALF…PSNYVSRGGG (65 aa)) enclose the SH3 domain. The 263-residue stretch at 117–379 (LRLEEVIGIG…ASILQQLEAL (263 aa)) folds into the Protein kinase domain. ATP contacts are provided by residues 123–131 (IGIGGFGKV) and Lys144. Asp241 acts as the Proton acceptor in catalysis. At Thr277 the chain carries Phosphothreonine; by autocatalysis. Ser281 is subject to Phosphoserine; by autocatalysis and MAP4K1. Ser394 bears the Phosphoserine mark. 2 leucine-zipper regions span residues 403 to 424 (IQGL…EEEL) and 438 to 459 (LRRR…ELTL). Ser507, Ser524, Ser548, Ser555, and Ser556 each carry phosphoserine. The tract at residues 537-643 (PAEPGQAWGR…SSGTPKLIQR (107 aa)) is disordered. Basic and acidic residues predominate over residues 550–562 (RRLEDSSNGERRA). The segment covering 597–609 (SSPLGSPSTPPAL) has biased composition (low complexity). Residues Ser654, Ser693, and Ser705 each carry the phosphoserine modification. A disordered region spans residues 655 to 847 (LGLGRDLQPP…QAPWVPEAGP (193 aa)). A compositionally biased stretch (pro residues) spans 676–694 (TTPPTPTPAPCPTEPPPSP). Thr708 carries the phosphothreonine modification. Residues Ser724, Ser727, Ser740, Ser748, Ser758, Ser770, Ser789, Ser793, and Ser815 each carry the phosphoserine modification. Over residues 760 to 773 (PLGLISRPRPSPLR) the composition is skewed to low complexity. The span at 787-799 (RPSPLPSPQPAPR) shows a compositional bias: pro residues. The segment covering 800–816 (RAPWTLFPDSDPFWDSP) has biased composition (low complexity).

Belongs to the protein kinase superfamily. STE Ser/Thr protein kinase family. MAP kinase kinase kinase subfamily. In terms of assembly, homodimer; undergoes dimerization during activation. Interacts with MAP2K4/MKK4. Interacts with MAP2K7/MKK7. Found in a complex with SH3RF1, RAC1, MAP2K7/MKK7, MAPK8IP1/JIP1 and MAPK8/JNK1. Mg(2+) is required as a cofactor. Autophosphorylation on serine and threonine residues within the activation loop plays a role in enzyme activation. Thr-277 is likely to be the main autophosphorylation site. Phosphorylation of Ser-555 and Ser-556 is induced by CDC42. In terms of tissue distribution, expressed in a wide variety of normal and neoplastic tissues including fetal lung, liver, heart and kidney, and adult lung, liver, heart, kidney, placenta, skeletal muscle, pancreas and brain.

The protein localises to the cytoplasm. It is found in the cytoskeleton. Its subcellular location is the microtubule organizing center. The protein resides in the centrosome. The enzyme catalyses L-seryl-[protein] + ATP = O-phospho-L-seryl-[protein] + ADP + H(+). It carries out the reaction L-threonyl-[protein] + ATP = O-phospho-L-threonyl-[protein] + ADP + H(+). Its activity is regulated as follows. Homodimerization via the leucine zipper domains is required for autophosphorylation and subsequent activation. In terms of biological role, activates the JUN N-terminal pathway. Required for serum-stimulated cell proliferation and for mitogen and cytokine activation of MAPK14 (p38), MAPK3 (ERK) and MAPK8 (JNK1) through phosphorylation and activation of MAP2K4/MKK4 and MAP2K7/MKK7. Plays a role in mitogen-stimulated phosphorylation and activation of BRAF, but does not phosphorylate BRAF directly. Influences microtubule organization during the cell cycle. The chain is Mitogen-activated protein kinase kinase kinase 11 from Homo sapiens (Human).